Consider the following 429-residue polypeptide: Histidine--tRNA ligase (429 aa).

Belongs to the class-II aminoacyl-tRNA synthetase family. As to quaternary structure, homodimer.

It localises to the cytoplasm. It catalyses the reaction tRNA(His) + L-histidine + ATP = L-histidyl-tRNA(His) + AMP + diphosphate + H(+). The polypeptide is Histidine--tRNA ligase (Streptococcus pneumoniae (strain P1031)).